Reading from the N-terminus, the 176-residue chain is Cathelicidin-2 (176 aa).

Positions M1–A29 are cleaved as a signal peptide. Q30 is subject to Pyrrolidone carboxylic acid. Positions Q30–V130 are excised as a propeptide. Disulfide bonds link C85-C96 and C107-C124. Positions I157–R176 are disordered. P173 bears the Proline amide mark. Residues G174–R176 constitute a propeptide, removed in mature form.

The protein belongs to the cathelicidin family. Elastase is responsible for its maturation. As to expression, large granules of neutrophils.

The protein localises to the secreted. In terms of biological role, exerts, in vitro, a potent antimicrobial activity. Probably due to an impairment of the function of the respiratory chain and of energy-dependent activities in the inner membrane of susceptible microorganisms. This is Cathelicidin-2 (CATHL2) from Bos taurus (Bovine).